A 411-amino-acid polypeptide reads, in one-letter code: Putative metal tolerance protein C3 (411 aa).

Topologically, residues 1–115 (MEVNYCPETP…DRAERAAQEL (115 aa)) are cytoplasmic. Residues 116 to 136 (AMQISNWANIFLLALKIYATV) traverse the membrane as a helical segment. Over 137–140 (KSGS) the chain is Vacuolar. A helical transmembrane segment spans residues 141–161 (IAIAASTLDSLLDLMAGGILW). Residues 162 to 184 (FTHLSMKNVNIYKYPIGKLRVQP) are Cytoplasmic-facing. The chain crosses the membrane as a helical span at residues 185–205 (VGIIIFAAVMATLGFQVLLVA). At 206 to 222 (AEQLISNEPSEKMNHVQ) the chain is on the vacuolar side. The chain crosses the membrane as a helical span at residues 223–243 (LIWLYSIMLSATAIKLVLWIY). At 244-262 (CKSSRNHIVRAYAKDHHFD) the chain is on the cytoplasmic side. The helical transmembrane segment at 263–283 (VVTNVLGLVAAVLANAFYWWL) threads the bilayer. Residues 284–287 (DPTG) are Vacuolar-facing. A helical transmembrane segment spans residues 288–308 (AILLAIYTIVNWSGTVMENAV). Over 309–390 (SLIGQSAPPE…LPEVERAFVH (82 aa)) the chain is Cytoplasmic.

The protein belongs to the cation diffusion facilitator (CDF) transporter (TC 2.A.4) family.

It localises to the vacuole membrane. Functionally, involved in sequestration of excess metal in the cytoplasm into vacuoles to maintain metal homeostasis. This chain is Putative metal tolerance protein C3 (MTPC3), found in Arabidopsis thaliana (Mouse-ear cress).